Reading from the N-terminus, the 255-residue chain is UPF0246 protein Cphy_1568 (255 aa).

This sequence belongs to the UPF0246 family.

This Lachnoclostridium phytofermentans (strain ATCC 700394 / DSM 18823 / ISDg) (Clostridium phytofermentans) protein is UPF0246 protein Cphy_1568.